Consider the following 555-residue polypeptide: CCR4-NOT transcription complex subunit 6-like (555 aa).

The segment at 1–152 is required for interaction with CNOT1, CNOT3 and CNOT7; it reads MRLIGMPKEK…SLYQDPDGTR (152 aa). LRR repeat units lie at residues 57-78, 80-101, 103-125, and 126-148; these read HLTA…IAKL, NLVY…LGNM, SLRE…GRLF, and QLQT…YQDP. The nuclease domain stretch occupies residues 158-555; the sequence is MLDNLAVHPE…VNGVHLPNRR (398 aa). Glu-240 contacts Mg(2+). The substrate site is built by Glu-240, Glu-276, His-360, and Pro-365. Asp-410 contacts Mg(2+). The active-site Proton donor/acceptor is the Asp-410. The substrate site is built by Asn-412, Asn-479, and Phe-484.

The protein belongs to the CCR4/nocturin family. In terms of assembly, component of the CCR4-NOT complex; distinct complexes seem to exist that differ in the participation of probably mutually exclusive catalytic subunits; the complex contains two deadenylase subunits, CNOT6 or CNOT6L, and CNOT7 or CNOT8. Interacts with CNOT1, CNOT3, CNOT7, CNOT8 and CNOT9. Interacts with TOB1. Interacts with NANOS2. Interacts with ZFP36. Interacts with ZFP36L2. Interacts with RBM46. Mg(2+) is required as a cofactor.

It is found in the cytoplasm. Its subcellular location is the nucleus. The enzyme catalyses Exonucleolytic cleavage of poly(A) to 5'-AMP.. In terms of biological role, poly(A) nuclease with 3'-5' RNase activity. Catalytic component of the CCR4-NOT complex which is one of the major cellular mRNA deadenylases and is linked to various cellular processes including bulk mRNA degradation, miRNA-mediated repression, translational repression during translational initiation and general transcription regulation. Additional complex functions may be a consequence of its influence on mRNA expression. Involved in mRNA decay mediated by the major-protein-coding determinant of instability (mCRD) of the FOS gene in the cytoplasm. Involved in deadenylation-dependent degradation of CDKN1B mRNA. Its mRNA deadenylase activity can be inhibited by TOB1. Mediates cell proliferation and cell survival and prevents cellular senescence. In Mus musculus (Mouse), this protein is CCR4-NOT transcription complex subunit 6-like (Cnot6l).